The primary structure comprises 244 residues: tRNA (guanine-N(1)-)-methyltransferase (244 aa).

S-adenosyl-L-methionine-binding positions include glycine 112 and 132-137 (IGDYIL).

Belongs to the RNA methyltransferase TrmD family. Homodimer.

Its subcellular location is the cytoplasm. It carries out the reaction guanosine(37) in tRNA + S-adenosyl-L-methionine = N(1)-methylguanosine(37) in tRNA + S-adenosyl-L-homocysteine + H(+). Specifically methylates guanosine-37 in various tRNAs. The protein is tRNA (guanine-N(1)-)-methyltransferase of Geobacillus kaustophilus (strain HTA426).